The primary structure comprises 62 residues: Large ribosomal subunit protein eL19 (62 aa).

The protein belongs to the eukaryotic ribosomal protein eL19 family.

The chain is Large ribosomal subunit protein eL19 (RPL19) from Zea mays (Maize).